A 443-amino-acid chain; its full sequence is Methyl-coenzyme M reductase II subunit beta (443 aa).

Residue Tyr-367 coordinates coenzyme M. Coenzyme B is bound at residue Gly-369.

Belongs to the methyl-coenzyme M reductase beta subunit family. As to quaternary structure, MCR is a hexamer of two alpha, two beta, and two gamma chains, forming a dimer of heterotrimers. It depends on coenzyme F430 as a cofactor.

It carries out the reaction coenzyme B + methyl-coenzyme M = methane + coenzyme M-coenzyme B heterodisulfide. It functions in the pathway one-carbon metabolism; methyl-coenzyme M reduction; methane from methyl-coenzyme M: step 1/1. Component of the methyl-coenzyme M reductase (MCR) I that catalyzes the reductive cleavage of methyl-coenzyme M (CoM-S-CH3 or 2-(methylthio)ethanesulfonate) using coenzyme B (CoB or 7-mercaptoheptanoylthreonine phosphate) as reductant which results in the production of methane and the mixed heterodisulfide of CoB and CoM (CoM-S-S-CoB). This is the final step in methanogenesis. The polypeptide is Methyl-coenzyme M reductase II subunit beta (Methanothermobacter marburgensis (strain ATCC BAA-927 / DSM 2133 / JCM 14651 / NBRC 100331 / OCM 82 / Marburg) (Methanobacterium thermoautotrophicum)).